The following is a 379-amino-acid chain: Succinyl-diaminopimelate desuccinylase (379 aa).

Position 70 (H70) interacts with Zn(2+). The active site involves D72. D103 serves as a coordination point for Zn(2+). E137 acts as the Proton acceptor in catalysis. Residues E138, E166, and H352 each contribute to the Zn(2+) site.

The protein belongs to the peptidase M20A family. DapE subfamily. As to quaternary structure, homodimer. Requires Zn(2+) as cofactor. It depends on Co(2+) as a cofactor.

The enzyme catalyses N-succinyl-(2S,6S)-2,6-diaminopimelate + H2O = (2S,6S)-2,6-diaminopimelate + succinate. It functions in the pathway amino-acid biosynthesis; L-lysine biosynthesis via DAP pathway; LL-2,6-diaminopimelate from (S)-tetrahydrodipicolinate (succinylase route): step 3/3. Catalyzes the hydrolysis of N-succinyl-L,L-diaminopimelic acid (SDAP), forming succinate and LL-2,6-diaminopimelate (DAP), an intermediate involved in the bacterial biosynthesis of lysine and meso-diaminopimelic acid, an essential component of bacterial cell walls. This chain is Succinyl-diaminopimelate desuccinylase, found in Shewanella baltica (strain OS223).